A 283-amino-acid chain; its full sequence is 1-deoxypentalenic acid 11-beta-hydroxylase (283 aa).

Position 117 (Arg-117) interacts with substrate. Positions 135 and 137 each coordinate Fe cation. 2-oxoglutarate-binding positions include 135 to 137 (HQD) and Trp-151. Substrate is bound at residue Arg-186. His-224 contacts Fe cation. 2-oxoglutarate contacts are provided by Ser-226 and Arg-238. The tract at residues 251 to 283 (HRGFNALTPWPESAKDASKGIMSKITGTPTTAE) is disordered.

Belongs to the PhyH family. Requires Fe cation as cofactor. The cofactor is L-ascorbate.

The catalysed reaction is 1-deoxypentalenate + 2-oxoglutarate + O2 = 1-deoxy-11beta-hydroxypentalenate + succinate + CO2. It functions in the pathway antibiotic biosynthesis; pentalenolactone biosynthesis. Its function is as follows. Catalyzes the conversion of 1-deoxypentalenic acid to 11-beta-hydroxy-1-deoxypentalenic acid in the biosynthesis of pentalenolactone antibiotic. The chain is 1-deoxypentalenic acid 11-beta-hydroxylase (pntH) from Streptomyces arenae.